Here is a 113-residue protein sequence, read N- to C-terminus: MAGFGLPNFGQLTEAFKKAQEIQQNAQALQDELDGMEIEGKSADGRASVWLSGNQQPLRVRLDPELLSAGQETCEAATLEALQAAYEQSTATMKGRMEELTGGLNLNLPGMGG.

It belongs to the YbaB/EbfC family. In terms of assembly, homodimer.

Its subcellular location is the cytoplasm. It is found in the nucleoid. Functionally, binds to DNA and alters its conformation. May be involved in regulation of gene expression, nucleoid organization and DNA protection. The chain is Nucleoid-associated protein SYNW0027 from Parasynechococcus marenigrum (strain WH8102).